A 451-amino-acid chain; its full sequence is Tubulin alpha chain (451 aa).

A GTP-binding site is contributed by Q11. K40 bears the N6-acetyllysine mark. Residues E71, G144, T145, T179, N206, and N228 each coordinate GTP. E71 lines the Mg(2+) pocket. The active site involves E254.

Belongs to the tubulin family. Dimer of alpha and beta chains. A typical microtubule is a hollow water-filled tube with an outer diameter of 25 nm and an inner diameter of 15 nM. Alpha-beta heterodimers associate head-to-tail to form protofilaments running lengthwise along the microtubule wall with the beta-tubulin subunit facing the microtubule plus end conferring a structural polarity. Microtubules usually have 13 protofilaments but different protofilament numbers can be found in some organisms and specialized cells. Requires Mg(2+) as cofactor. In terms of processing, undergoes a tyrosination/detyrosination cycle, the cyclic removal and re-addition of a C-terminal tyrosine residue by the enzymes tubulin tyrosine carboxypeptidase (TTCP) and tubulin tyrosine ligase (TTL), respectively. Post-translationally, acetylation of alpha chains at Lys-40 stabilizes microtubules and affects affinity and processivity of microtubule motors. This modification has a role in multiple cellular functions, ranging from cell motility, cell cycle progression or cell differentiation to intracellular trafficking and signaling.

The protein resides in the cytoplasm. It localises to the cytoskeleton. The enzyme catalyses GTP + H2O = GDP + phosphate + H(+). Functionally, tubulin is the major constituent of microtubules, a cylinder consisting of laterally associated linear protofilaments composed of alpha- and beta-tubulin heterodimers. Microtubules grow by the addition of GTP-tubulin dimers to the microtubule end, where a stabilizing cap forms. Below the cap, tubulin dimers are in GDP-bound state, owing to GTPase activity of alpha-tubulin. The polypeptide is Tubulin alpha chain (TUBA) (Chlorella vulgaris (Green alga)).